The chain runs to 205 residues: dITP/XTP pyrophosphatase (205 aa).

7–12 (SNNRGK) is a binding site for substrate. Glu39 and Asp68 together coordinate Mg(2+). Catalysis depends on Asp68, which acts as the Proton acceptor. Residues Ala69, 154-157 (FGFD), Lys177, and 182-183 (HR) each bind substrate.

The protein belongs to the HAM1 NTPase family. Homodimer. Mg(2+) serves as cofactor.

It carries out the reaction XTP + H2O = XMP + diphosphate + H(+). The enzyme catalyses dITP + H2O = dIMP + diphosphate + H(+). The catalysed reaction is ITP + H2O = IMP + diphosphate + H(+). Its function is as follows. Pyrophosphatase that catalyzes the hydrolysis of nucleoside triphosphates to their monophosphate derivatives, with a high preference for the non-canonical purine nucleotides XTP (xanthosine triphosphate), dITP (deoxyinosine triphosphate) and ITP. Seems to function as a house-cleaning enzyme that removes non-canonical purine nucleotides from the nucleotide pool, thus preventing their incorporation into DNA/RNA and avoiding chromosomal lesions. The sequence is that of dITP/XTP pyrophosphatase from Acidovorax ebreus (strain TPSY) (Diaphorobacter sp. (strain TPSY)).